We begin with the raw amino-acid sequence, 181 residues long: MKQFRGTTILSVRRNGKVVIGGDGQVSMGSTIMKANARKVRRLYNGKVIAGFAGGTADAFTLFERFESKLEKHSGNLTRAAVELAKDWRTDRILRRLEALLTVADSKASLIITGLGDVIEPEQSLMAIGSGGSFAQAAAKALLENTKLSARKIVEKALTIAADICIYTNLNFTIEELDSES.

T7 is a catalytic residue. Positions 162, 165, and 168 each coordinate Na(+).

The protein belongs to the peptidase T1B family. HslV subfamily. As to quaternary structure, a double ring-shaped homohexamer of HslV is capped on each side by a ring-shaped HslU homohexamer. The assembly of the HslU/HslV complex is dependent on binding of ATP.

The protein resides in the cytoplasm. The catalysed reaction is ATP-dependent cleavage of peptide bonds with broad specificity.. With respect to regulation, allosterically activated by HslU binding. In terms of biological role, protease subunit of a proteasome-like degradation complex believed to be a general protein degrading machinery. This is ATP-dependent protease subunit HslV from Coxiella burnetii (strain RSA 331 / Henzerling II).